The chain runs to 347 residues: NADH-ubiquinone oxidoreductase chain 2 (347 aa).

Helical transmembrane passes span 3-23 (PVVLTMILLTIMLGTVIVMTT), 25-45 (HWLLVWIGFEMNMLAIIPILM), 59-79 (YFLTQATASMLLMLAIVINLI), 96-116 (IIMTLALAMKLGLAPFHFWVP), 122-142 (IQLSSGLILLTWQKLAPMSIL), 149-169 (INLHLLLLMSLTSILIGGWGG), 178-198 (IMAYSSIAHMGWMTTIMIYNP), 200-220 (MALLNLTIYIILTTTTFMTFM), 237-257 (MPLLTSAVLMTMLSLGGLPPL), 274-294 (NSIIMPTIMAITALLNLFFYM), and 325-345 (LLSPMIILSTLILPLSPMLAL).

Belongs to the complex I subunit 2 family. As to quaternary structure, core subunit of respiratory chain NADH dehydrogenase (Complex I) which is composed of 45 different subunits. Interacts with TMEM242.

The protein resides in the mitochondrion inner membrane. The enzyme catalyses a ubiquinone + NADH + 5 H(+)(in) = a ubiquinol + NAD(+) + 4 H(+)(out). Functionally, core subunit of the mitochondrial membrane respiratory chain NADH dehydrogenase (Complex I) which catalyzes electron transfer from NADH through the respiratory chain, using ubiquinone as an electron acceptor. Essential for the catalytic activity and assembly of complex I. The sequence is that of NADH-ubiquinone oxidoreductase chain 2 from Paranyctimene raptor (Unstriped tube-nosed fruit bat).